A 619-amino-acid chain; its full sequence is Secretogranin-2 (619 aa).

A signal peptide spans 1–30; sequence MTESKAYRFGAVLLLIHLIFLVPGTEAASF. The residue at position 153 (Tyr-153) is a Sulfotyrosine. Ser-176 and Ser-270 each carry phosphoserine. Residues 247 to 307 form a disordered region; it reads VGGEDWSPME…RKESKDQLSE (61 aa). 2 stretches are compositionally biased toward basic and acidic residues: residues 255-286 and 295-307; these read MEEKIETQTQEEVRDSKENTEKNEQINEEMKR and EGNRKESKDQLSE. Ser-434, Ser-534, Ser-557, and Ser-558 each carry phosphoserine.

Belongs to the chromogranin/secretogranin protein family. Interacts with Secretogranin III/SCG3. As to expression, brain. Expression in the pituitary is restricted to the anterior lobe. Expression in the hypothalamus is observed in the neuronal cells and neurons of arcuate nucleus, supraoptic nucleus and median eminence (at protein level).

Its subcellular location is the secreted. In terms of biological role, neuroendocrine protein of the granin family that regulates the biogenesis of secretory granules. The polypeptide is Secretogranin-2 (Scg2) (Rattus norvegicus (Rat)).